A 123-amino-acid chain; its full sequence is Fluoride-specific ion channel FluC (123 aa).

The next 4 membrane-spanning stretches (helical) occupy residues 7-27 (MAIA…SGLL), 39-59 (MVNS…FWGF), 68-88 (FFGT…YETF), and 101-121 (LNIL…FMLA). Residues Gly75 and Ser78 each coordinate Na(+).

Belongs to the fluoride channel Fluc/FEX (TC 1.A.43) family.

Its subcellular location is the cell membrane. It catalyses the reaction fluoride(in) = fluoride(out). Na(+) is not transported, but it plays an essential structural role and its presence is essential for fluoride channel function. Functionally, fluoride-specific ion channel. Important for reducing fluoride concentration in the cell, thus reducing its toxicity. The sequence is that of Fluoride-specific ion channel FluC from Thermococcus kodakarensis (strain ATCC BAA-918 / JCM 12380 / KOD1) (Pyrococcus kodakaraensis (strain KOD1)).